A 247-amino-acid chain; its full sequence is Ribonuclease PH (247 aa).

Residues Arg87 and 125 to 127 (GTR) contribute to the phosphate site.

This sequence belongs to the RNase PH family. As to quaternary structure, homohexameric ring arranged as a trimer of dimers.

The catalysed reaction is tRNA(n+1) + phosphate = tRNA(n) + a ribonucleoside 5'-diphosphate. Functionally, phosphorolytic 3'-5' exoribonuclease that plays an important role in tRNA 3'-end maturation. Removes nucleotide residues following the 3'-CCA terminus of tRNAs; can also add nucleotides to the ends of RNA molecules by using nucleoside diphosphates as substrates, but this may not be physiologically important. Probably plays a role in initiation of 16S rRNA degradation (leading to ribosome degradation) during starvation. This is Ribonuclease PH from Frankia casuarinae (strain DSM 45818 / CECT 9043 / HFP020203 / CcI3).